A 266-amino-acid polypeptide reads, in one-letter code: rRNA adenine N-6-methyltransferase (266 aa).

6 residues coordinate S-adenosyl-L-methionine: histidine 14, threonine 16, glycine 41, glutamate 62, aspartate 87, and asparagine 103.

This sequence belongs to the class I-like SAM-binding methyltransferase superfamily. rRNA adenine N(6)-methyltransferase family.

In terms of biological role, involved in erythromycin resistance. This Bacteroides fragilis protein is rRNA adenine N-6-methyltransferase (ermFU).